Consider the following 511-residue polypeptide: Myrosinase 5 (511 aa).

A signal peptide spans 1 to 23 (MAIPKAHYSLAVLVLLFVVVSSS). Disulfide bonds link cysteine 31/cysteine 450, cysteine 39/cysteine 445, and cysteine 230/cysteine 233. N-linked (GlcNAc...) asparagine glycans are attached at residues asparagine 46 and asparagine 53. A beta-D-glucoside contacts are provided by residues glutamine 64, histidine 165, and 210-211 (NQ). The N-linked (GlcNAc...) asparagine glycan is linked to asparagine 222. Residues tyrosine 351 and glutamate 418 each contribute to the a beta-D-glucoside site. Glutamate 418 serves as the catalytic Nucleophile. Asparagine 428 is a glycosylation site (N-linked (GlcNAc...) asparagine). A beta-D-glucoside is bound by residues tryptophan 467, 474 to 475 (EF), and phenylalanine 483. Asparagine 489 carries N-linked (GlcNAc...) asparagine glycosylation.

This sequence belongs to the glycosyl hydrolase 1 family. In terms of tissue distribution, specifically expressed in roots.

The enzyme catalyses a thioglucoside + H2O = a sugar + a thiol.. It catalyses the reaction Hydrolysis of terminal, non-reducing beta-D-glucosyl residues with release of beta-D-glucose.. Its function is as follows. Hydrolyzes sinigrin and, with lower efficiency, p-nitrophenyl beta-D-glucoside. This chain is Myrosinase 5, found in Arabidopsis thaliana (Mouse-ear cress).